The primary structure comprises 408 residues: Intracellular coagulation inhibitor 2 (408 aa).

The first 22 residues, 1-22 (MLSRRTLDCCLVMLIVSTTFCQ), serve as a signal peptide directing secretion. A disulfide bridge links C50 with C249. N174 carries N-linked (GlcNAc...) asparagine glycosylation.

The protein belongs to the serpin family. In terms of assembly, monomer. Forms a covalent heterodimer with clotting factor C chain B. Forms a covalent heterodimer with proclotting enzyme heavy chain. In terms of tissue distribution, specifically expressed in hemocytes (at protein level).

It is found in the secreted. In terms of biological role, serine protease inhibitor that inhibits proclotting enzyme and to a lesser extent clotting factor C and clotting factor G. This chain is Intracellular coagulation inhibitor 2, found in Tachypleus tridentatus (Japanese horseshoe crab).